Here is a 415-residue protein sequence, read N- to C-terminus: Homoserine O-succinyltransferase (415 aa).

Residues 69 to 383 (NAVLVCHALN…PHGHDAFLLD (315 aa)) form the AB hydrolase-1 domain. The Nucleophile role is filled by S175. R245 is a substrate binding site. Active-site residues include D344 and H377. D378 contacts substrate.

The protein belongs to the AB hydrolase superfamily. MetX family. As to quaternary structure, homodimer.

It is found in the cytoplasm. It carries out the reaction L-homoserine + succinyl-CoA = O-succinyl-L-homoserine + CoA. The protein operates within amino-acid biosynthesis; L-methionine biosynthesis via de novo pathway; O-succinyl-L-homoserine from L-homoserine: step 1/1. Functionally, transfers a succinyl group from succinyl-CoA to L-homoserine, forming succinyl-L-homoserine. The protein is Homoserine O-succinyltransferase of Bordetella parapertussis (strain 12822 / ATCC BAA-587 / NCTC 13253).